Reading from the N-terminus, the 134-residue chain is Loki profilin-1 (134 aa).

The interval 55 to 62 (LALGKKGI) is loki loop.

The protein belongs to the Asgard profilin family.

Its subcellular location is the cytoplasm. It is found in the cytoskeleton. With respect to regulation, inhibition of rabbit actin polymerization is reduced by phosphatidylinositol-(4,5)-P2(1,2-dipalmitoyl), a soluble form of the phospholipid phosphatidylinositol, suggesting an unknown lipid might regulate actin-profilin interaction in vivo. In terms of biological role, binds to actin and affects the structure of the cytoskeleton. At high concentrations inhibits spontaneous rabbit actin nucleation. This strongly suggests this archaea has a profilin-regulated actin system, and actin-type genes can be identified in this organism. The polypeptide is Loki profilin-1 (Lokiarchaeum sp. (strain GC14_75)).